Consider the following 298-residue polypeptide: CCR4-NOT transcription complex subunit 9 (298 aa).

Belongs to the CNOT9 family. Homodimer. Component of the CCR4-NOT complex.

The protein localises to the nucleus. It localises to the cytoplasm. The protein resides in the P-body. Component of the CCR4-NOT complex which is one of the major cellular mRNA deadenylases and is linked to various cellular processes including bulk mRNA degradation, miRNA-mediated repression, translational repression during translational initiation and general transcription regulation. Additional complex functions may be a consequence of its influence on mRNA expression. Involved in down-regulation of MYB- and JUN-dependent transcription. Enhances ligand-dependent transcriptional activity of nuclear hormone receptors. May play a role in cell differentiation. The sequence is that of CCR4-NOT transcription complex subunit 9 from Danio rerio (Zebrafish).